The primary structure comprises 616 residues: Proline--tRNA ligase (616 aa).

Belongs to the class-II aminoacyl-tRNA synthetase family. ProS type 1 subfamily. As to quaternary structure, homodimer.

Its subcellular location is the cytoplasm. It catalyses the reaction tRNA(Pro) + L-proline + ATP = L-prolyl-tRNA(Pro) + AMP + diphosphate. Catalyzes the attachment of proline to tRNA(Pro) in a two-step reaction: proline is first activated by ATP to form Pro-AMP and then transferred to the acceptor end of tRNA(Pro). As ProRS can inadvertently accommodate and process non-cognate amino acids such as alanine and cysteine, to avoid such errors it has two additional distinct editing activities against alanine. One activity is designated as 'pretransfer' editing and involves the tRNA(Pro)-independent hydrolysis of activated Ala-AMP. The other activity is designated 'posttransfer' editing and involves deacylation of mischarged Ala-tRNA(Pro). The misacylated Cys-tRNA(Pro) is not edited by ProRS. This is Proline--tRNA ligase from Streptococcus gordonii (strain Challis / ATCC 35105 / BCRC 15272 / CH1 / DL1 / V288).